The primary structure comprises 390 residues: Protein PIN-LIKES 3 (390 aa).

Over 1–14 (MVKLLELFITSSKP) the chain is Lumenal. Residues 15–35 (VVEILLITSVGFYMALDGVNL) form a helical membrane-spanning segment. Residues 36-43 (LGHDARKY) are Cytoplasmic-facing. The chain crosses the membrane as a helical span at residues 44–61 (LNNIVFYVFSPSLIGSRL). The Lumenal portion of the chain corresponds to 62–76 (ADSVTYESLVKMWFM). Residues 77-97 (PVNVLLTFIIGSLLGWIVIVI) traverse the membrane as a helical segment. Topologically, residues 98–107 (TKPPSHLRGL) are cytoplasmic. A helical transmembrane segment spans residues 108-128 (ILGCCAAGNLGNMPLIIIPAV). Residues 129 to 144 (CKEKGGPFGDPESCQK) lie on the Lumenal side of the membrane. Residues 145–165 (YGMGYVALSMAMGSIYIWTYV) form a helical membrane-spanning segment. At 166-227 (YNLMRVLSNS…SLSQKVNLKT (62 aa)) the chain is on the cytoplasmic side. A helical membrane pass occupies residues 228 to 248 (IFAPSTIAAMIALVIGLITPL). The Lumenal portion of the chain corresponds to 249–265 (RKLIIGTEAPLRVLQDS). The helical transmembrane segment at 266–286 (VTLVGDGAVPAMTMIIGGNLL) threads the bilayer. Residues 287–297 (KGLRSSGMKMS) lie on the Cytoplasmic side of the membrane. A helical membrane pass occupies residues 298–318 (SIIGVLVARYVLLPMSGVLIV). Residues 319–331 (RGAYKLDLVTSEP) lie on the Lumenal side of the membrane. Residues 332-352 (LYQFVLLLQYAVPPAMNLGTI) form a helical membrane-spanning segment. Topologically, residues 353–364 (TQLFGTGESECS) are cytoplasmic. A helical transmembrane segment spans residues 365-385 (VIMLWTYSLASIALTVWPTFF). The Lumenal segment spans residues 386-390 (MWLVA).

This sequence belongs to the auxin efflux carrier (TC 2.A.69.2) family. As to expression, expressed in seedlings, rosette and cauline leaves, flowers and siliques.

Its subcellular location is the endoplasmic reticulum membrane. In terms of biological role, involved in cellular auxin homeostasis by regulating auxin metabolism. Regulates intracellular auxin accumulation at the endoplasmic reticulum and thus auxin availability for nuclear auxin signaling. This is Protein PIN-LIKES 3 (PILS3) from Arabidopsis thaliana (Mouse-ear cress).